Here is a 106-residue protein sequence, read N- to C-terminus: Nucleoid-associated protein XCV1128 (106 aa).

Positions 81–106 (IDAESKDRMGSATAGMQLPPGMKLPF) are disordered.

Belongs to the YbaB/EbfC family. As to quaternary structure, homodimer.

The protein localises to the cytoplasm. The protein resides in the nucleoid. Functionally, binds to DNA and alters its conformation. May be involved in regulation of gene expression, nucleoid organization and DNA protection. The sequence is that of Nucleoid-associated protein XCV1128 from Xanthomonas euvesicatoria pv. vesicatoria (strain 85-10) (Xanthomonas campestris pv. vesicatoria).